The sequence spans 200 residues: NADH-quinone oxidoreductase subunit C (200 aa).

The protein belongs to the complex I 30 kDa subunit family. NDH-1 is composed of 14 different subunits. Subunits NuoB, C, D, E, F, and G constitute the peripheral sector of the complex.

It is found in the cell inner membrane. The catalysed reaction is a quinone + NADH + 5 H(+)(in) = a quinol + NAD(+) + 4 H(+)(out). In terms of biological role, NDH-1 shuttles electrons from NADH, via FMN and iron-sulfur (Fe-S) centers, to quinones in the respiratory chain. The immediate electron acceptor for the enzyme in this species is believed to be ubiquinone. Couples the redox reaction to proton translocation (for every two electrons transferred, four hydrogen ions are translocated across the cytoplasmic membrane), and thus conserves the redox energy in a proton gradient. This is NADH-quinone oxidoreductase subunit C from Ralstonia nicotianae (strain ATCC BAA-1114 / GMI1000) (Ralstonia solanacearum).